Reading from the N-terminus, the 278-residue chain is Phosphate import ATP-binding protein PstB (278 aa).

An ABC transporter domain is found at 32–273 (YETRDLNLWY…PSDKRTEDYI (242 aa)). ATP is bound at residue 64-71 (GPSGCGKS).

It belongs to the ABC transporter superfamily. Phosphate importer (TC 3.A.1.7) family. As to quaternary structure, the complex is composed of two ATP-binding proteins (PstB), two transmembrane proteins (PstC and PstA) and a solute-binding protein (PstS).

It localises to the cell membrane. It carries out the reaction phosphate(out) + ATP + H2O = ADP + 2 phosphate(in) + H(+). Functionally, part of the ABC transporter complex PstSACB involved in phosphate import. Responsible for energy coupling to the transport system. This Halalkalibacterium halodurans (strain ATCC BAA-125 / DSM 18197 / FERM 7344 / JCM 9153 / C-125) (Bacillus halodurans) protein is Phosphate import ATP-binding protein PstB.